The following is an 873-amino-acid chain: Alanine--tRNA ligase (873 aa).

Zn(2+) contacts are provided by histidine 562, histidine 566, cysteine 664, and histidine 668.

This sequence belongs to the class-II aminoacyl-tRNA synthetase family. Zn(2+) serves as cofactor.

It localises to the cytoplasm. The enzyme catalyses tRNA(Ala) + L-alanine + ATP = L-alanyl-tRNA(Ala) + AMP + diphosphate. Functionally, catalyzes the attachment of alanine to tRNA(Ala) in a two-step reaction: alanine is first activated by ATP to form Ala-AMP and then transferred to the acceptor end of tRNA(Ala). Also edits incorrectly charged Ser-tRNA(Ala) and Gly-tRNA(Ala) via its editing domain. The polypeptide is Alanine--tRNA ligase (Photobacterium profundum (strain SS9)).